A 79-amino-acid chain; its full sequence is MNKTIEYQKEFLKENNQLLSIPVKKNILKEILQNDEQDTIITNCITKEVSINLDLIKNPKVLYSIYIMVVEYLKSMNIA.

It belongs to the asfivirus D79L family.

This is an uncharacterized protein from African swine fever virus (isolate Tick/South Africa/Pretoriuskop Pr4/1996) (ASFV).